Consider the following 253-residue polypeptide: Large ribosomal subunit protein uL1m (253 aa).

A mitochondrion-targeting transit peptide spans 1-81 (MSSLIALGKR…SIALKSNRRA (81 aa)).

The protein belongs to the universal ribosomal protein uL1 family. In terms of assembly, component of the mitochondrial large ribosomal subunit (mt-LSU). Mature yeast 74S mitochondrial ribosomes consist of a small (37S) and a large (54S) subunit. The 37S small subunit contains a 15S ribosomal RNA (15S mt-rRNA) and at least 32 different proteins. The 54S large subunit contains a 21S rRNA (21S mt-rRNA) and at least 45 different proteins.

Its subcellular location is the mitochondrion. Functionally, component of the mitochondrial ribosome (mitoribosome), a dedicated translation machinery responsible for the synthesis of mitochondrial genome-encoded proteins, including at least some of the essential transmembrane subunits of the mitochondrial respiratory chain. The mitoribosomes are attached to the mitochondrial inner membrane and translation products are cotranslationally integrated into the membrane. This Schizosaccharomyces pombe (strain 972 / ATCC 24843) (Fission yeast) protein is Large ribosomal subunit protein uL1m (mrpl1).